The following is a 280-amino-acid chain: MLSAVARGYQGWFHPCARLSVRMSSTGIDRKGVLANRVAVVTGSTSGIGFAIARRLARDGAHVVISSRKQQNVDRAMAKLQGEGLSVAGIVCHVGKAEDREQLVAKALEHCGGVDFLVCSAGVNPLVGSTLGTSEQIWDKILSVNVKSPALLLSQLLPYMENRRGAVILVSSIAAYNPVVALGVYNVSKTALLGLTRTLALELAPKDIRVNCVVPGIIKTDFSKVFHGNESLWKNFKEHHQLQRIGESEDCAGIVSFLCSPDASYVNGENIAVAGYSTRL.

A mitochondrion-targeting transit peptide spans 1–23; that stretch reads MLSAVARGYQGWFHPCARLSVRM. Serine 46 and isoleucine 48 together coordinate NAD(+). Lysine 96 carries the N6-acetyllysine; alternate modification. Lysine 96 carries the N6-succinyllysine; alternate modification. Serine 172 contacts substrate. 2 residues coordinate NAD(+): tyrosine 185 and lysine 189. Tyrosine 185 serves as the catalytic Proton acceptor. An N6-acetyllysine; alternate modification is found at lysine 219. Position 219 is an N6-succinyllysine; alternate (lysine 219). An NAD(+)-binding site is contributed by threonine 220. Serine 223 carries the phosphoserine modification. An N6-succinyllysine modification is found at lysine 237.

It belongs to the short-chain dehydrogenases/reductases (SDR) family. In terms of assembly, directly interacts with MDM2; this interaction occurs in the nucleus and does not target DHRS2 to degradation. In terms of tissue distribution, widely expressed, with highest levels in liver and kidney, followed by heart, spleen, skeletal muscle and placenta. In hemopoietic cells, expressed in dendritic cells, but not in monocytes, macrophages, granulocytes, nor in B and T lymphocytes.

The protein localises to the mitochondrion matrix. The protein resides in the nucleus. NADPH-dependent oxidoreductase which catalyzes the reduction of dicarbonyl compounds. Displays reductase activity in vitro with 3,4-hexanedione, 2,3-heptanedione and 1-phenyl-1,2-propanedione as substrates. May function as a dicarbonyl reductase in the enzymatic inactivation of reactive carbonyls involved in covalent modification of cellular components. Also displays a minor hydroxysteroid dehydrogenase activity toward bile acids such as ursodeoxycholic acid (UDCA) and isoursodeoxycholic acid (isoUDCA), which makes it unlikely to control hormone levels. Doesn't show any activity in vitro with retinoids and sugars as substrates. Attenuates MDM2-mediated p53/TP53 degradation, leading to p53/TP53 stabilization and increased transcription activity, resulting in the accumulation of MDM2 and CDKN1A/p21. Reduces proliferation, migration and invasion of cancer cells and well as the production of ROS in cancer. The polypeptide is Dehydrogenase/reductase SDR family member 2, mitochondrial (Homo sapiens (Human)).